We begin with the raw amino-acid sequence, 408 residues long: UV excision repair protein RAD23 homolog B (408 aa).

Residues 1-79 enclose the Ubiquitin-like domain; that stretch reads MLVTLKTLQQ…VVVMVTKPKA (79 aa). Residues 80–111 are compositionally biased toward low complexity; it reads VTTPAPATTQQSNSAATTTVSSSTAPAVTQAP. Residues 80 to 176 form a disordered region; the sequence is VTTPAPATTQ…TSGDSSRSNL (97 aa). The segment covering 112–122 has biased composition (pro residues); sequence APAPASAPTPT. Residues 123–143 show a composition bias toward low complexity; it reads PVSVTPAPTTASSEPAPASAA. A compositionally biased stretch (basic and acidic residues) spans 144-153; that stretch reads KQEKPAERPV. Residues 154-174 are compositionally biased toward low complexity; it reads ETPVATTPTSTDSTSGDSSRS. Phosphothreonine is present on residues T155 and T164. S174 bears the Phosphoserine mark. T186 is subject to Phosphothreonine. The 41-residue stretch at 188 to 228 folds into the UBA 1 domain; the sequence is QSYENMVTEIMSMGYEREQVIAALRASFNNPDRAVEYLLMG. A Phosphoserine modification is found at S199. Y202 carries the post-translational modification Phosphotyrosine. The disordered stretch occupies residues 236-274; the sequence is QAVVDPPPAASTGAPQSSVAAAAATTTATTTTTSSGGHP. Positions 255–268 are enriched in low complexity; the sequence is AAAAATTTATTTTT. In terms of domain architecture, STI1 spans 273-316; sequence HPLEFLRNQPQFQQMRQIIQQNPSLLPALLQQIGRENPQLLQQI. A UBA 2 domain is found at 363 to 403; that stretch reads PQEKEAIERLKALGFPEGLVIQAYFACEKNENLAANFLLQQ.

Belongs to the RAD23 family. As to quaternary structure, component of the XPC complex composed of XPC, RAD23B and CETN2. Interacts with NGLY1 and PSMC1. Interacts with ATXN3. Interacts with PSMD4 and PSMC5. Interacts with AMFR. Interacts with VCP; the interaction is indirect and mediated by NGLY1.

Its subcellular location is the nucleus. The protein resides in the cytoplasm. In terms of biological role, multiubiquitin chain receptor involved in modulation of proteasomal degradation. Binds to polyubiquitin chains. Proposed to be capable to bind simultaneously to the 26S proteasome and to polyubiquitinated substrates and to deliver ubiquitinated proteins to the proteasome. May play a role in endoplasmic reticulum-associated degradation (ERAD) of misfolded glycoproteins by association with PNGase and delivering deglycosylated proteins to the proteasome. Functionally, involved in global genome nucleotide excision repair (GG-NER) by acting as component of the XPC complex. Cooperatively with CETN2 appears to stabilize XPC. May protect XPC from proteasomal degradation. The XPC complex is proposed to represent the first factor bound at the sites of DNA damage and together with other core recognition factors, XPA, RPA and the TFIIH complex, is part of the pre-incision (or initial recognition) complex. The XPC complex recognizes a wide spectrum of damaged DNA characterized by distortions of the DNA helix such as single-stranded loops, mismatched bubbles or single-stranded overhangs. The orientation of XPC complex binding appears to be crucial for inducing a productive NER. XPC complex is proposed to recognize and to interact with unpaired bases on the undamaged DNA strand which is followed by recruitment of the TFIIH complex and subsequent scanning for lesions in the opposite strand in a 5'-to-3' direction by the NER machinery. Cyclobutane pyrimidine dimers (CPDs) which are formed upon UV-induced DNA damage esacpe detection by the XPC complex due to a low degree of structural perurbation. Instead they are detected by the UV-DDB complex which in turn recruits and cooperates with the XPC complex in the respective DNA repair. In vitro, the XPC:RAD23B dimer is sufficient to initiate NER; it preferentially binds to cisplatin and UV-damaged double-stranded DNA and also binds to a variety of chemically and structurally diverse DNA adducts. XPC:RAD23B contacts DNA both 5' and 3' of a cisplatin lesion with a preference for the 5' side. XPC:RAD23B induces a bend in DNA upon binding. XPC:RAD23B stimulates the activity of DNA glycosylases TDG and SMUG1. This Bos taurus (Bovine) protein is UV excision repair protein RAD23 homolog B (RAD23B).